Here is a 287-residue protein sequence, read N- to C-terminus: Myoblast determination protein 1 homolog B (287 aa).

The bHLH domain maps to 96–147 (DRRRAATMRERRRLSKVNDAFETLKRCTSTNPNQRLPKVDILRNAISYIDSL). Disordered stretches follow at residues 161-202 (NMEH…FYTD) and 231-277 (QSPS…QLSH). A compositionally biased stretch (low complexity) spans 168–188 (DSDASSPSSNCSDGMNSPPCS). The span at 267-277 (SPGNSCTQLSH) shows a compositional bias: polar residues.

Efficient DNA binding requires dimerization with another bHLH protein.

The protein localises to the nucleus. May act as a transcriptional activator that promotes transcription of muscle-specific target genes and plays a role in muscle differentiation. This Xenopus laevis (African clawed frog) protein is Myoblast determination protein 1 homolog B (myod1-b).